A 790-amino-acid polypeptide reads, in one-letter code: Pentatricopeptide repeat-containing protein OTP51, chloroplastic (790 aa).

Residues 1-56 (MATTSPCAAPSPSLRCPLALSHPFASPPPPPALRLAGPKLLPGRLAVSPPPGIPAV) constitute a chloroplast transit peptide. PPR repeat units lie at residues 182–216 (NFAL…GRVP), 217–254 (AEST…GGYK), 256–296 (RLSL…NLDV), 299–333 (DVYA…GFDE), 334–368 (GIDV…GSDL), 369–403 (PVQA…NIPP), 404–438 (NVAS…DMKH), 439–469 (LMPA…CIAR), 473–507 (NRIL…GMIG), and 509–543 (NTKS…KYDV). The interval 762-790 (GSSIGSDGTQDTDTDSDDDMQMSDTERDE) is disordered. Residues 771–790 (QDTDTDSDDDMQMSDTERDE) are compositionally biased toward acidic residues.

Belongs to the PPR family. P subfamily.

It is found in the plastid. It localises to the chloroplast. In terms of biological role, promotes the splicing of group II introns in chloroplasts. Required for the splicing of intron 2 of plastid ycf3 transcripts, a factor required for the assembly of photosystem I (PSI). Involved in the splicing of atpF, ndhA, petB and rps16 chloroplastic transcripts. Required for the assembly of PSI. The sequence is that of Pentatricopeptide repeat-containing protein OTP51, chloroplastic from Oryza sativa subsp. japonica (Rice).